A 269-amino-acid chain; its full sequence is SF-assemblin (269 aa).

The segment at 1 to 23 (MSISPGRSFSPMRASGLTGITSA) is disordered. Residues 1–24 (MSISPGRSFSPMRASGLTGITSAG) are nonhelical region. The segment at 25-269 (PTAKLEHVSE…LQEGLKLVST (245 aa)) is rod. A coiled-coil region spans residues 98–144 (AERSAAQHVDMQNSLKQAVDSLSNRLQDLHSLVREEREQRRNDIEHL).

This sequence belongs to the SF-assemblin family.

It localises to the cytoplasm. It is found in the cytoskeleton. Its function is as follows. Major component of the striated microtubule-associated fibers (SMAFs; system-I-fibers). The sequence is that of SF-assemblin from Chlamydomonas moewusii (Chlamydomonas eugametos).